A 121-amino-acid polypeptide reads, in one-letter code: Basic phospholipase A2 homolog GodMT-II (121 aa).

7 disulfides stabilise this stretch: Cys26–Cys115, Cys28–Cys44, Cys43–Cys95, Cys49–Cys121, Cys50–Cys88, Cys57–Cys81, and Cys75–Cys86. The important for membrane-damaging activities in eukaryotes and bacteria; heparin-binding stretch occupies residues 105 to 117 (KNYKIYPKPLCKK).

It belongs to the phospholipase A2 family. Group II subfamily. K49 sub-subfamily. Monomer. Expressed by the venom gland.

The protein localises to the secreted. Functionally, snake venom phospholipase A2 homolog that lacks enzymatic activity but shows high myotoxic activities. In vivo, induces a mild edema when subcutaneously injected into mice foot pad. The chain is Basic phospholipase A2 homolog GodMT-II from Cerrophidion godmani (Porthidium godmani).